Consider the following 476-residue polypeptide: Ribulose bisphosphate carboxylase large chain (476 aa).

The substrate site is built by Asn-124 and Thr-174. Lys-176 serves as the catalytic Proton acceptor. Residue Lys-178 coordinates substrate. 3 residues coordinate Mg(2+): Lys-202, Asp-204, and Glu-205. The residue at position 202 (Lys-202) is an N6-carboxylysine. Catalysis depends on His-295, which acts as the Proton acceptor. Arg-296, His-328, and Ser-380 together coordinate substrate.

This sequence belongs to the RuBisCO large chain family. Type I subfamily. As to quaternary structure, heterohexadecamer of 8 large chains and 8 small chains; disulfide-linked. The disulfide link is formed within the large subunit homodimers. Forms complexes of many stoichiometries with Raf1 with and without RbcS. RuBisCO interacts with the C-terminus of CcmM. Mg(2+) is required as a cofactor. The disulfide bond which can form in the large chain dimeric partners within the hexadecamer appears to be associated with oxidative stress and protein turnover.

The protein resides in the carboxysome. It catalyses the reaction 2 (2R)-3-phosphoglycerate + 2 H(+) = D-ribulose 1,5-bisphosphate + CO2 + H2O. The catalysed reaction is D-ribulose 1,5-bisphosphate + O2 = 2-phosphoglycolate + (2R)-3-phosphoglycerate + 2 H(+). In terms of biological role, ruBisCO catalyzes two reactions: the carboxylation of D-ribulose 1,5-bisphosphate, the primary event in carbon dioxide fixation, as well as the oxidative fragmentation of the pentose substrate in the photorespiration process. Both reactions occur simultaneously and in competition at the same active site. The polypeptide is Ribulose bisphosphate carboxylase large chain (Nostoc sp. (strain PCC 7120 / SAG 25.82 / UTEX 2576)).